The following is an 800-amino-acid chain: Endoglucanase (800 aa).

An N-terminal signal peptide occupies residues 1–30 (MMLRKKTKQLISSILILVLLLSLFPTALAA). Glutamate 190 functions as the Proton donor in the catalytic mechanism. Glutamate 305 acts as the Nucleophile in catalysis. Residues 761 to 800 (AATTEPVEPEPVDPGEETPPVDEKEAKTEQKEAEKEEKEE) form a disordered region. The segment covering 767-780 (VEPEPVDPGEETPP) has biased composition (acidic residues). Over residues 781 to 800 (VDEKEAKTEQKEAEKEEKEE) the composition is skewed to basic and acidic residues.

This sequence belongs to the glycosyl hydrolase 5 (cellulase A) family.

It carries out the reaction Endohydrolysis of (1-&gt;4)-beta-D-glucosidic linkages in cellulose, lichenin and cereal beta-D-glucans.. The sequence is that of Endoglucanase from Halalkalibacter akibai (strain ATCC 43226 / DSM 21942 / CIP 109018 / JCM 9157 / 1139) (Bacillus akibai).